The chain runs to 312 residues: 3-methyl-2-oxobutanoate hydroxymethyltransferase (312 aa).

It belongs to the PanB family.

It catalyses the reaction 3-methyl-2-oxobutanoate + (6R)-5,10-methylene-5,6,7,8-tetrahydrofolate + H2O = 2-dehydropantoate + (6S)-5,6,7,8-tetrahydrofolate. It participates in cofactor biosynthesis; (R)-pantothenate biosynthesis; (R)-pantoate from 3-methyl-2-oxobutanoate: step 1/2. Functionally, probable 3-methyl-2-oxobutanoate hydroxymethyltransferase required for pantothenic acid biosynthesis. Acts downstream in the pantothenic acid pathway. This is 3-methyl-2-oxobutanoate hydroxymethyltransferase from Saccharomyces cerevisiae (strain ATCC 204508 / S288c) (Baker's yeast).